Reading from the N-terminus, the 484-residue chain is Malonate-semialdehyde dehydrogenase 1 (484 aa).

NAD(+)-binding residues include Phe153, Lys177, Glu180, Arg181, Ser230, and Thr252. Catalysis depends on Cys285, which acts as the Nucleophile. Glu385 contributes to the NAD(+) binding site.

This sequence belongs to the aldehyde dehydrogenase family. IolA subfamily. Homotetramer.

It carries out the reaction 3-oxopropanoate + NAD(+) + CoA + H2O = hydrogencarbonate + acetyl-CoA + NADH + H(+). It catalyses the reaction 2-methyl-3-oxopropanoate + NAD(+) + CoA + H2O = propanoyl-CoA + hydrogencarbonate + NADH + H(+). It participates in polyol metabolism; myo-inositol degradation into acetyl-CoA; acetyl-CoA from myo-inositol: step 7/7. In terms of biological role, catalyzes the oxidation of malonate semialdehyde (MSA) and methylmalonate semialdehyde (MMSA) into acetyl-CoA and propanoyl-CoA, respectively. Is involved in a myo-inositol catabolic pathway. Bicarbonate, and not CO2, is the end-product of the enzymatic reaction. This chain is Malonate-semialdehyde dehydrogenase 1, found in Geobacillus thermodenitrificans (strain NG80-2).